Here is a 1167-residue protein sequence, read N- to C-terminus: Tight junction protein 2 (1167 aa).

Residues 10–97 (TVTLQKDSKR…IAAIVVKRPR (88 aa)) enclose the PDZ 1 domain. Residues Ser107, Ser127, Ser130, Ser140, Ser145, Ser147, Ser173, Ser194, Ser205, and Ser239 each carry the phosphoserine modification. Residues 129–195 (RSGYSERSRH…SRERSRGRSL (67 aa)) form a disordered region. The tract at residues 225 to 286 (SYHEAYEPDY…KGQHDPDRPI (62 aa)) is disordered. Positions 242-262 (YDRRAHPETRYERSRSREHLR) are enriched in basic and acidic residues. In terms of domain architecture, PDZ 2 spans 287–365 (GVLLTKSKAN…KLQLVVLRDS (79 aa)). Residues Ser305, Ser378, Ser380, Ser386, Ser395, Ser404, Ser410, and Ser411 each carry the phosphoserine modification. Residues 381 to 485 (EVEDISEIES…LRPSPEDEAI (105 aa)) are disordered. Positions 395-426 (SPEERRQQYSDQDYHSSTEKLKERPSSREETS) are enriched in basic and acidic residues. Phosphothreonine is present on Thr435. Ser479 is modified (phosphoserine). One can recognise a PDZ 3 domain in the interval 489–570 (NTKMVRFKKG…GETVTILAQS (82 aa)). Tyr554 is subject to Phosphotyrosine. Positions 584–649 (GDSFFIRSHF…PNKSRAEQMA (66 aa)) constitute an SH3 domain. Positions 660 to 858 (GDRADFWRMR…WFGSLKDSIQ (199 aa)) constitute a Guanylate kinase-like domain. Phosphoserine is present on residues Ser684 and Ser884. Thr887 bears the Phosphothreonine mark. Residues Ser895 and Ser902 each carry the phosphoserine modification. Disordered stretches follow at residues 904–1055 (FEDT…PRSV) and 1095–1167 (YAVP…DTEL). Phosphothreonine is present on residues Thr907 and Thr915. Residues 938-949 (VQHEENIRKSSP) show a composition bias toward basic and acidic residues. 5 positions are modified to phosphoserine: Ser948, Ser960, Ser968, Ser988, and Ser1044. Residues 976–990 (EPPKARSQNREDSFD) are compositionally biased toward basic and acidic residues. Acidic residues predominate over residues 1037–1049 (ESEEVGESTEEQE). Tyr1095 is modified (phosphotyrosine). Ser1124 and Ser1136 each carry phosphoserine. Residues 1165–1167 (TEL) are interaction with SCRIB.

Belongs to the MAGUK family. As to quaternary structure, homodimer. Interacts (via PDZ2 domain) with TJP1/ZO1 (via PDZ2 domain). Interacts with UBN1. Interacts with SCRIB. Interacts with OCLN. Interacts with SAFB in the nucleus. Interacts with USP53 (via the C-terminal region). Interacts with claudins, including CLDN1, CLDN2, CLDN3, CLDN5 and CLDN7. Interacts with CLDN18. Interacts (via N-terminus) with CTNNA1.

It is found in the cell junction. The protein resides in the adherens junction. The protein localises to the cell membrane. Its subcellular location is the nucleus. It localises to the tight junction. Its function is as follows. Plays a role in tight junctions and adherens junctions. Acts as a positive regulator of RANKL-induced osteoclast differentiation, potentially via mediating downstream transcriptional activity. The polypeptide is Tight junction protein 2 (Mus musculus (Mouse)).